A 343-amino-acid polypeptide reads, in one-letter code: Heat-inducible transcription repressor HrcA (343 aa).

The protein belongs to the HrcA family.

Its function is as follows. Negative regulator of class I heat shock genes (grpE-dnaK-dnaJ and groELS operons). Prevents heat-shock induction of these operons. This is Heat-inducible transcription repressor HrcA from Leptospira biflexa serovar Patoc (strain Patoc 1 / Ames).